We begin with the raw amino-acid sequence, 359 residues long: Proton-gated ion channel (359 aa).

An N-terminal signal peptide occupies residues 1–43 (MFPTGWRPKLSESIAASRMLWQPMAAVAVVQIGLLWFSPPVWG). The Periplasmic portion of the chain corresponds to 44–235 (QDMVSPPPPI…LDYQLRISRQ (192 aa)). The helical transmembrane segment at 236–258 (YFSYIPNIILPMLFILFISWTAF) threads the bilayer. Residues 259-261 (WST) lie on the Cytoplasmic side of the membrane. A helical membrane pass occupies residues 262 to 286 (SYEANVTLVVSTLIAHIAFNILVET). Topologically, residues 287-294 (NLPKTPYM) are periplasmic. A helical transmembrane segment spans residues 295–323 (TYTGAIIFMIYLFYFVAVIEVTVQHYLKV). At 324–326 (ESQ) the chain is on the cytoplasmic side. A helical transmembrane segment spans residues 327 to 359 (PARAASITRASRIAFPVVFLLANIILAFLFFGF).

This sequence belongs to the ligand-gated ion channel (TC 1.A.9) family. As to quaternary structure, homopentamer.

It localises to the cell inner membrane. Tetraethylammonium (TEA) and tetrabutylammonium (TBA) inhibit the proton-activated currents in a dose- and voltage-dependent manner in vitro, whereas the blocker of acid sensing ion channels, amiloride, has no effect. Channel current of GLIC can be inhibited by inhaled and intravenous general anesthetics at and below concentrations used clinically. Ion conduction is also inhibited by lidocaine and by divalent transition metal ions such as cadmium ions. Its function is as follows. Cationic channel with similar permeabilities for Na(+) and K(+), that is activated by an increase of the proton concentration on the extracellular side. Displays no permeability for chloride ions. Shows slow kinetics of activation, no desensitization and a single channel conductance of 8 pS. Might contribute to adaptation to external pH change. The sequence is that of Proton-gated ion channel (glvI) from Gloeobacter violaceus (strain ATCC 29082 / PCC 7421).